A 156-amino-acid chain; its full sequence is Small ribosomal subunit protein uS7 (156 aa).

Belongs to the universal ribosomal protein uS7 family. As to quaternary structure, part of the 30S ribosomal subunit. Contacts proteins S9 and S11.

Functionally, one of the primary rRNA binding proteins, it binds directly to 16S rRNA where it nucleates assembly of the head domain of the 30S subunit. Is located at the subunit interface close to the decoding center, probably blocks exit of the E-site tRNA. In Desulfosudis oleivorans (strain DSM 6200 / JCM 39069 / Hxd3) (Desulfococcus oleovorans), this protein is Small ribosomal subunit protein uS7.